The primary structure comprises 99 residues: Large ribosomal subunit protein uL23cz/uL23cy (99 aa).

The tract at residues 1–37 (MGGVENPVSTDKAIRLPERKQYSSNAEPNPSKTEVKR) is disordered. A compositionally biased stretch (basic and acidic residues) spans 12-21 (KAIRLPERKQ). Positions 22–32 (YSSNAEPNPSK) are enriched in polar residues.

It belongs to the universal ribosomal protein uL23 family. In terms of assembly, part of the 50S ribosomal subunit.

It localises to the plastid. Its subcellular location is the chloroplast. Its function is as follows. Binds to 23S rRNA. The sequence is that of Large ribosomal subunit protein uL23cz/uL23cy (rpl23-A) from Selaginella uncinata (Blue spike-moss).